Consider the following 513-residue polypeptide: MATVEKKYPYALDSEGKAKYVPVWRFTQPHMMAFHLSWICFFMSFVATFAPASLAPVIRDDLFLTKSEVGNAGVSAVCGAIAARLFMGIFVDVVGPRYGAAAAMLMTAPAVFCMALVTDFSTFACVRFFIGLSLCMFVCCQFWCGTMFNVQIVGTANAIAAGWGNMGGGACHFIMPLIYQGIKDGGVPGYQAWRWAFFVPGGIYIVTATLTLLLGIDHPSGKDYRDLKKEGTLKAKGNMWPVIKCGLGNYRSWILALTYGYSFGVELTVDNVIVEYLFDQFGLNLAVAGALGAIFGLMNIFSRATGGMISDLIAKPFGMRGRLWVLWITQTLGGIFCIIMGKVSNSLTATIVIMIIFSIFCQQACGMHFGITPFVSRRAYGVVSGLVGAGGNVGAAITQAIWFSGTATWQINLSRPDSFVWMGVQAVALTVAVMFIWFPMWGSMFTGPREGVEEEDYYLREWSAEEVAQGLHQGSMRFAMESKSQRGYKDKRMLDAVGETASADVAAVKATVA.

The next 12 membrane-spanning stretches (helical) occupy residues 38–58 (WICF…APVI), 74–94 (VSAV…VDVV), 98–118 (YGAA…ALVT), 128–148 (FFIG…GTMF), 158–178 (AIAA…MPLI), 196–216 (AFFV…LLGI), 247–265 (LGNY…SFGV), 281–301 (FGLN…MNIF), 323–343 (LWVL…MGKV), 351–371 (IVIM…HFGI), 383–403 (VSGL…AIWF), and 419–439 (FVWM…IWFP).

This sequence belongs to the major facilitator superfamily. Nitrate/nitrite porter (TC 2.A.1.8) family.

The protein resides in the cell membrane. Functionally, involved in nitrate transport, but does not seem to be able to mediate transport by its own. Acts as a dual component transporter with NAR2 (system 2). Involved in a high affinity transport specific for nitrate. This is Nitrate transporter 2.2 from Chlamydomonas reinhardtii (Chlamydomonas smithii).